The sequence spans 383 residues: MSTHLFTSESVSEGHPDKIADQISDAVLDEILKQDPKARVACETYVKTGMALVGGEITTSAWVDIENLTRQVICDIGYKHSDMGFDGHSCAVLNAIGKQSQDINQGVDRENPLDQGAGDQGIMFGYATNETEVFMPAPITYAHRLMERQAKVRKDGTLDWLRPDAKSQLTFKYEDNKIVGIDAVVLSTQHAESVSQKEVHEGVMEEIIKPVLPAKWLDKDTKYFINPTGRFVIGGPMGDCGLTGRKIIVDTYGGAARHGGGAFSGKDPSKVDRSAAYAARYVAKNIVAAGLADRCEIQLSYAIGVAEPTSIMLETFGTGKVANELLVKLVREFFDLRPYGLIQMLDLIRPIYRETAAYGHFGREQFPWEKIDRAAELSAAAGL.

Histidine 15 provides a ligand contact to ATP. Aspartate 17 serves as a coordination point for Mg(2+). A K(+)-binding site is contributed by glutamate 43. Positions 56 and 99 each coordinate L-methionine. A flexible loop region spans residues 99–109; that stretch reads QSQDINQGVDR. ATP is bound by residues 164-166, 230-231, aspartate 239, 245-246, alanine 262, and lysine 266; these read DAK, RF, and RK. An L-methionine-binding site is contributed by aspartate 239. An L-methionine-binding site is contributed by lysine 270.

This sequence belongs to the AdoMet synthase family. As to quaternary structure, homotetramer; dimer of dimers. Mg(2+) serves as cofactor. Requires K(+) as cofactor.

It is found in the cytoplasm. The catalysed reaction is L-methionine + ATP + H2O = S-adenosyl-L-methionine + phosphate + diphosphate. The protein operates within amino-acid biosynthesis; S-adenosyl-L-methionine biosynthesis; S-adenosyl-L-methionine from L-methionine: step 1/1. Functionally, catalyzes the formation of S-adenosylmethionine (AdoMet) from methionine and ATP. The overall synthetic reaction is composed of two sequential steps, AdoMet formation and the subsequent tripolyphosphate hydrolysis which occurs prior to release of AdoMet from the enzyme. The sequence is that of S-adenosylmethionine synthase from Actinobacillus succinogenes (strain ATCC 55618 / DSM 22257 / CCUG 43843 / 130Z).